Here is a 240-residue protein sequence, read N- to C-terminus: 2-C-methyl-D-erythritol 4-phosphate cytidylyltransferase (240 aa).

The protein belongs to the IspD/TarI cytidylyltransferase family. IspD subfamily.

It catalyses the reaction 2-C-methyl-D-erythritol 4-phosphate + CTP + H(+) = 4-CDP-2-C-methyl-D-erythritol + diphosphate. It participates in isoprenoid biosynthesis; isopentenyl diphosphate biosynthesis via DXP pathway; isopentenyl diphosphate from 1-deoxy-D-xylulose 5-phosphate: step 2/6. Catalyzes the formation of 4-diphosphocytidyl-2-C-methyl-D-erythritol from CTP and 2-C-methyl-D-erythritol 4-phosphate (MEP). This is 2-C-methyl-D-erythritol 4-phosphate cytidylyltransferase from Chlorobium luteolum (strain DSM 273 / BCRC 81028 / 2530) (Pelodictyon luteolum).